We begin with the raw amino-acid sequence, 348 residues long: Probable dual-specificity RNA methyltransferase RlmN (348 aa).

Glu-95 functions as the Proton acceptor in the catalytic mechanism. The region spanning 101–335 (SGNRLTICVS…VSLRASRGLD (235 aa)) is the Radical SAM core domain. Residues Cys-108 and Cys-340 are joined by a disulfide bond. Positions 115, 119, and 122 each coordinate [4Fe-4S] cluster. S-adenosyl-L-methionine contacts are provided by residues 162 to 163 (GE), Ser-192, 221 to 223 (SLH), and Asn-297. The S-methylcysteine intermediate role is filled by Cys-340.

It belongs to the radical SAM superfamily. RlmN family. [4Fe-4S] cluster is required as a cofactor.

The protein localises to the cytoplasm. It carries out the reaction adenosine(2503) in 23S rRNA + 2 reduced [2Fe-2S]-[ferredoxin] + 2 S-adenosyl-L-methionine = 2-methyladenosine(2503) in 23S rRNA + 5'-deoxyadenosine + L-methionine + 2 oxidized [2Fe-2S]-[ferredoxin] + S-adenosyl-L-homocysteine. It catalyses the reaction adenosine(37) in tRNA + 2 reduced [2Fe-2S]-[ferredoxin] + 2 S-adenosyl-L-methionine = 2-methyladenosine(37) in tRNA + 5'-deoxyadenosine + L-methionine + 2 oxidized [2Fe-2S]-[ferredoxin] + S-adenosyl-L-homocysteine. Functionally, specifically methylates position 2 of adenine 2503 in 23S rRNA and position 2 of adenine 37 in tRNAs. The chain is Probable dual-specificity RNA methyltransferase RlmN from Prochlorococcus marinus (strain SARG / CCMP1375 / SS120).